The primary structure comprises 128 residues: Cytochrome c' (128 aa).

Q13, Q17, E69, T70, C118, C121, and H122 together coordinate heme c.

As to quaternary structure, homodimer. Binds 1 heme c group covalently per subunit.

Cytochrome c' is the most widely occurring bacterial c-type cytochrome. Cytochromes c' are high-spin proteins and the heme has no sixth ligand. Their exact function is not known. This is Cytochrome c' from Magnetospirillum molischianum (Rhodospirillum molischianum).